The following is a 355-amino-acid chain: 3-dehydroquinate synthase (355 aa).

Residues Ser66–Lys71, Gly100–Asp104, Thr124–Thr125, Lys136, Lys145, and Phe163–Thr166 contribute to the NAD(+) site. Residues Glu178, His242, and His256 each coordinate Zn(2+).

The protein belongs to the sugar phosphate cyclases superfamily. Dehydroquinate synthase family. The cofactor is Co(2+). Zn(2+) serves as cofactor. NAD(+) is required as a cofactor.

The protein localises to the cytoplasm. It catalyses the reaction 7-phospho-2-dehydro-3-deoxy-D-arabino-heptonate = 3-dehydroquinate + phosphate. The protein operates within metabolic intermediate biosynthesis; chorismate biosynthesis; chorismate from D-erythrose 4-phosphate and phosphoenolpyruvate: step 2/7. Its function is as follows. Catalyzes the conversion of 3-deoxy-D-arabino-heptulosonate 7-phosphate (DAHP) to dehydroquinate (DHQ). The sequence is that of 3-dehydroquinate synthase from Staphylococcus saprophyticus subsp. saprophyticus (strain ATCC 15305 / DSM 20229 / NCIMB 8711 / NCTC 7292 / S-41).